We begin with the raw amino-acid sequence, 142 residues long: uncharacterized protein (142 aa).

Residues 1 to 9 (MDMVSPVLN) lie on the Cytoplasmic side of the membrane. Residues 10 to 30 (LQSSILGELVGIIGKVFFLLI) traverse the membrane as a helical segment. Over 31–41 (EEIKYPIITPK) the chain is Extracellular. The chain crosses the membrane as a helical span at residues 42 to 62 (IIVDAQISSWSLFFFASICNL). The Cytoplasmic segment spans residues 63–101 (SAKFREPIVTTSSIISLMESEKDLKNVNEYFQIMAKMLF). Residues 102–122 (ILENKIVVSLFVVFNISVLII) form a helical membrane-spanning segment. Over 123–142 (VKSEPYSYGKVLFKPSSSIF) the chain is Extracellular.

It is found in the membrane. This is an uncharacterized protein from Saccharomyces cerevisiae (strain ATCC 204508 / S288c) (Baker's yeast).